Here is a 91-residue protein sequence, read N- to C-terminus: UPF0250 protein PFLU_5418 (91 aa).

It belongs to the UPF0250 family.

This is UPF0250 protein PFLU_5418 from Pseudomonas fluorescens (strain SBW25).